A 158-amino-acid chain; its full sequence is Endoribonuclease YbeY (158 aa).

Zn(2+) is bound by residues histidine 117, histidine 121, and histidine 127.

The protein belongs to the endoribonuclease YbeY family. It depends on Zn(2+) as a cofactor.

It is found in the cytoplasm. Its function is as follows. Single strand-specific metallo-endoribonuclease involved in late-stage 70S ribosome quality control and in maturation of the 3' terminus of the 16S rRNA. The chain is Endoribonuclease YbeY from Buchnera aphidicola subsp. Schizaphis graminum (strain Sg).